The chain runs to 81 residues: Cortexin-3 (81 aa).

Residues 29–49 (MTFVFVILLFIFLGILIVRCF) form a helical membrane-spanning segment.

This sequence belongs to the cortexin family.

The protein localises to the membrane. The chain is Cortexin-3 (CTXN3) from Homo sapiens (Human).